A 327-amino-acid polypeptide reads, in one-letter code: MKRLGSVQRKMPCVFVTEVKAEPSAKREHQPFKVLATETLSEKALDADVYNAVATEKVDGTCCYVTNYKGQPYLWARLDRKPNKQADKRFKKFLHSKESAKEFHWNTEEDFKPVPECWIPAKEIEKQNGKPVPDENGHIPGWVPVEKGSKQYCWHSSVVNYEFGIALVLRHHPDDPGVLEISAVPLSELLEQTLELIGTSINGNPYGLGSKKSPLHFLTPHGAFQVRNLPTLKHNDLLSWFEDCREGQIEGIVWHCGDGCLIKVHRHHLGLCWPLPDTYMNSKPVIINMNLNLNNYDCAFDNQSLFNQFSKIDKQKFERLKDIILDV.

Mg(2+) is required as a cofactor. It depends on Mn(2+) as a cofactor. Post-translationally, AMPylates itself (auto-AMPylation).

It carries out the reaction ATP + (ribonucleotide)n-3'-hydroxyl + 5'-phospho-(ribonucleotide)m = (ribonucleotide)n+m + AMP + diphosphate.. Its function is as follows. Functions as an RNA ligase, in vitro. The ligation reaction entails three nucleotidyl transfer steps. In the first step, the RNA ligase reacts with ATP in the absence of nucleic acid to form a covalent ligase-AMP intermediate and release pyrophosphate. In step 2, the ligase-AMP binds to the nucleic acid and transfers the adenylate to the 5'-PO4 terminus to form an adenylylated intermediate. In step 3, the RNA ligase directs the attack of the 3'-OH on the 5'-phosphoanhydride linkage, resulting in a repaired 3'-5' phosphodiester and release of AMP. Exhibits selectivity for single-stranded RNA substrates and may not have nick-sealing activity on double-stranded DNA-RNA hybrids. May play a role in maintaining RNA integrity under stress conditions, for example in response to reactive oxygen species (ROS). This Mus musculus (Mouse) protein is RNA ligase 1.